Consider the following 376-residue polypeptide: Queuine tRNA-ribosyltransferase (376 aa).

Asp89 acts as the Proton acceptor in catalysis. Residues 89-93 (DSGGF), Asp143, Gln194, and Gly221 each bind substrate. The interval 252-258 (GVGIPSN) is RNA binding. Asp271 functions as the Nucleophile in the catalytic mechanism. Positions 276–280 (ARNGR) are RNA binding; important for wobble base 34 recognition. 4 residues coordinate Zn(2+): Cys309, Cys311, Cys314, and His340.

It belongs to the queuine tRNA-ribosyltransferase family. In terms of assembly, homodimer. Within each dimer, one monomer is responsible for RNA recognition and catalysis, while the other monomer binds to the replacement base PreQ1. Zn(2+) serves as cofactor.

The enzyme catalyses 7-aminomethyl-7-carbaguanine + guanosine(34) in tRNA = 7-aminomethyl-7-carbaguanosine(34) in tRNA + guanine. Its pathway is tRNA modification; tRNA-queuosine biosynthesis. Catalyzes the base-exchange of a guanine (G) residue with the queuine precursor 7-aminomethyl-7-deazaguanine (PreQ1) at position 34 (anticodon wobble position) in tRNAs with GU(N) anticodons (tRNA-Asp, -Asn, -His and -Tyr). Catalysis occurs through a double-displacement mechanism. The nucleophile active site attacks the C1' of nucleotide 34 to detach the guanine base from the RNA, forming a covalent enzyme-RNA intermediate. The proton acceptor active site deprotonates the incoming PreQ1, allowing a nucleophilic attack on the C1' of the ribose to form the product. After dissociation, two additional enzymatic reactions on the tRNA convert PreQ1 to queuine (Q), resulting in the hypermodified nucleoside queuosine (7-(((4,5-cis-dihydroxy-2-cyclopenten-1-yl)amino)methyl)-7-deazaguanosine). This Clostridium botulinum (strain Kyoto / Type A2) protein is Queuine tRNA-ribosyltransferase.